Consider the following 500-residue polypeptide: Na(+)/H(+) antiporter NhaB (500 aa).

Transmembrane regions (helical) follow at residues 34–54, 58–78, 96–116, 129–149, 150–170, 205–225, 241–261, 311–331, 350–370, 394–414, 450–470, and 477–497; these read LLLA…QFIF, MALK…ALLL, VILL…LLLF, AVLS…LDAL, TVTA…HRVA, LLMH…VGEP, FFLK…VTCV, ILIV…LMVI, FQDA…VAVI, MLYL…VATI, ATPN…APLI, and MVWM…WAVT.

The protein belongs to the NhaB Na(+)/H(+) (TC 2.A.34) antiporter family.

It localises to the cell inner membrane. It carries out the reaction 2 Na(+)(in) + 3 H(+)(out) = 2 Na(+)(out) + 3 H(+)(in). Functionally, na(+)/H(+) antiporter that extrudes sodium in exchange for external protons. This Pseudomonas entomophila (strain L48) protein is Na(+)/H(+) antiporter NhaB.